A 103-amino-acid polypeptide reads, in one-letter code: Cytochrome c-552 (103 aa).

The N-terminal stretch at 1 to 22 is a signal peptide; it reads MKTAWLGTFAASALLVAGYAQA. Residues C32, C35, H36, and M81 each coordinate heme c.

As to quaternary structure, monomer. In terms of processing, binds 1 heme c group covalently per subunit.

The protein localises to the periplasm. Functionally, monoheme c-type cytochrome. Probable electron donor to membrane cytochrome oxidase and to periplasmic nitrite reductase. The sequence is that of Cytochrome c-552 (cyt) from Nitrosomonas europaea (strain ATCC 19718 / CIP 103999 / KCTC 2705 / NBRC 14298).